Reading from the N-terminus, the 119-residue chain is Protein YdaY (119 aa).

The polypeptide is Protein YdaY (ydaY) (Escherichia coli (strain K12)).